We begin with the raw amino-acid sequence, 215 residues long: Sodium channel regulatory subunit beta-2 (215 aa).

The N-terminal stretch at 1–29 is a signal peptide; it reads MHRDAWLPRPAFSLTGLSLFFSLVPSGRS. At 30–157 the chain is on the extracellular side; the sequence is MEVTVPTTLS…LEVPPERDST (128 aa). One can recognise an Ig-like C2-type domain in the interval 32–154; that stretch reads VTVPTTLSVL…QVLLEVPPER (123 aa). N-linked (GlcNAc...) asparagine glycosylation is found at Asn42, Asn66, and Asn74. 2 disulfide bridges follow: Cys50–Cys127 and Cys72–Cys75. A helical transmembrane segment spans residues 158–179; sequence VAVIVGASVGGFLAVVILVLMV. Residues 180–215 lie on the Cytoplasmic side of the membrane; that stretch reads VKCVRRKKEQKLSTDDLKTEEEGKTDGEGNAEDGAK. The tract at residues 187-215 is disordered; sequence KEQKLSTDDLKTEEEGKTDGEGNAEDGAK. Over residues 189–215 the composition is skewed to basic and acidic residues; sequence QKLSTDDLKTEEEGKTDGEGNAEDGAK. Phosphoserine is present on Ser192. A Phosphothreonine modification is found at Thr204.

Belongs to the sodium channel auxiliary subunit SCN2B (TC 8.A.17) family. In terms of assembly, a voltage-gated sodium (Nav) channel consists of an ion-conducting pore-forming alpha subunit functional on its own that is regulated by one or more beta subunits. The beta subunit SCN2B is disulfide-linked to the pore-forming alpha subunit. Interacts with SCN1A; regulatory subunit of SCN1A/Nav1.1. Interacts with SCN2A; regulatory subunit of SCN2A/Nav1.2. Interacts with SCN3A; regulatory subunit of SCN3A/Nav1.3. Interacts with SCN5A; regulatory subunit of SCN5A/Nav1.5. Interacts with SCN8A; regulatory subunit of SCN8A/Nav1.6. Interacts with SCN9A; regulatory subunit of SCN9A/Nav1.7. Interacts with SCN10A; regulatory subunit of SCN10A/Nav1.8. Interacts with TNR; may play a crucial role in clustering and regulation of activity of SCN2B-containing Nav channels at nodes of Ranvier.

It is found in the cell membrane. The protein resides in the cell projection. The protein localises to the axon. Regulatory subunit of multiple voltage-gated sodium (Nav) channels directly mediating the depolarization of excitable membranes. Navs, also called VGSCs (voltage-gated sodium channels) or VDSCs (voltage-dependent sodium channels), operate by switching between closed and open conformations depending on the voltage difference across the membrane. In the open conformation they allow Na(+) ions to selectively pass through the pore, along their electrochemical gradient. The influx of Na+ ions provokes membrane depolarization, initiating the propagation of electrical signals throughout cells and tissues. The accessory beta subunits participate in localization and functional modulation of the Nav channels. Modulates the activity of SCN1A/Nav1.1, SCN2A/Nav1.2, SCN2A/Nav1.3, SCN5A/Nav1.5, SCN8A/Nav1.6, SCN9A/Nav1.7 and SCN10A/Nav1.8. This Rattus norvegicus (Rat) protein is Sodium channel regulatory subunit beta-2.